The chain runs to 447 residues: GTPase Der (447 aa).

2 EngA-type G domains span residues Pro3–Arg167 and Ile181–Met354. Residues Gly9–Ser16, Asp56–Phe60, Asn119–Glu122, Gly187–Ser194, Asp234–Ile238, and Asn299–Asp302 contribute to the GTP site. A KH-like domain is found at Ser355 to Lys439.

This sequence belongs to the TRAFAC class TrmE-Era-EngA-EngB-Septin-like GTPase superfamily. EngA (Der) GTPase family. As to quaternary structure, associates with the 50S ribosomal subunit.

Its function is as follows. GTPase that plays an essential role in the late steps of ribosome biogenesis. The sequence is that of GTPase Der from Herminiimonas arsenicoxydans.